A 369-amino-acid chain; its full sequence is Dihydroorotate dehydrogenase (quinone) (369 aa).

FMN contacts are provided by residues 66–70 (AGFDK) and T90. Residue K70 participates in substrate binding. Substrate is bound at residue 115–119 (NRMGF). N143 and N176 together coordinate FMN. Position 176 (N176) interacts with substrate. S179 functions as the Nucleophile in the catalytic mechanism. Residue N181 participates in substrate binding. Residues K217 and T245 each contribute to the FMN site. 246–247 (NT) contacts substrate. FMN contacts are provided by residues G271, G300, and 321 to 322 (YT).

It belongs to the dihydroorotate dehydrogenase family. Type 2 subfamily. In terms of assembly, monomer. FMN serves as cofactor.

Its subcellular location is the cell membrane. It catalyses the reaction (S)-dihydroorotate + a quinone = orotate + a quinol. The protein operates within pyrimidine metabolism; UMP biosynthesis via de novo pathway; orotate from (S)-dihydroorotate (quinone route): step 1/1. In terms of biological role, catalyzes the conversion of dihydroorotate to orotate with quinone as electron acceptor. The chain is Dihydroorotate dehydrogenase (quinone) from Nocardia farcinica (strain IFM 10152).